The primary structure comprises 201 residues: Probable GTP-binding protein EngB (201 aa).

Residues Thr-23 to Met-196 enclose the EngB-type G domain. GTP is bound by residues Gly-31–Ser-38, Gly-58–Met-62, Asp-76–Gly-79, Thr-143–Asp-146, and Tyr-175–Ala-177. Mg(2+) contacts are provided by Ser-38 and Thr-60.

The protein belongs to the TRAFAC class TrmE-Era-EngA-EngB-Septin-like GTPase superfamily. EngB GTPase family. Requires Mg(2+) as cofactor.

Functionally, necessary for normal cell division and for the maintenance of normal septation. The protein is Probable GTP-binding protein EngB of Desulfitobacterium hafniense (strain DSM 10664 / DCB-2).